The following is a 427-amino-acid chain: 3-phosphoshikimate 1-carboxyvinyltransferase (427 aa).

Residues lysine 20, serine 21, and arginine 25 each contribute to the 3-phosphoshikimate site. Phosphoenolpyruvate is bound at residue lysine 20. Positions 92 and 120 each coordinate phosphoenolpyruvate. 3-phosphoshikimate contacts are provided by serine 166, glutamine 168, aspartate 312, and lysine 339. Glutamine 168 contributes to the phosphoenolpyruvate binding site. The Proton acceptor role is filled by aspartate 312. Phosphoenolpyruvate is bound by residues arginine 343 and arginine 385.

The protein belongs to the EPSP synthase family. As to quaternary structure, monomer.

The protein resides in the cytoplasm. The enzyme catalyses 3-phosphoshikimate + phosphoenolpyruvate = 5-O-(1-carboxyvinyl)-3-phosphoshikimate + phosphate. It participates in metabolic intermediate biosynthesis; chorismate biosynthesis; chorismate from D-erythrose 4-phosphate and phosphoenolpyruvate: step 6/7. Its function is as follows. Catalyzes the transfer of the enolpyruvyl moiety of phosphoenolpyruvate (PEP) to the 5-hydroxyl of shikimate-3-phosphate (S3P) to produce enolpyruvyl shikimate-3-phosphate and inorganic phosphate. The sequence is that of 3-phosphoshikimate 1-carboxyvinyltransferase from Streptococcus agalactiae serotype Ia (strain ATCC 27591 / A909 / CDC SS700).